We begin with the raw amino-acid sequence, 184 residues long: GTP-binding protein Rheb (184 aa).

Lys-8 participates in a covalent cross-link: Glycyl lysine isopeptide (Lys-Gly) (interchain with G-Cter in ubiquitin). GDP contacts are provided by Ser-16 and Val-17. Ser-16 lines the GTP pocket. Residues Gly-18, Lys-19, Ser-20, Ser-21, Val-32, Tyr-35, Thr-38, Asn-119, and Asp-122 each contribute to the GTP site. GDP is bound by residues Lys-19, Ser-20, and Ser-21. Ser-20 is a binding site for Mg(2+). The short motif at 35–43 (YDPTIENTF) is the Effector region element. Thr-38 contributes to the GDP binding site. Thr-38 contributes to the Mg(2+) binding site. Asp-122 is a GDP binding site. Ser-130 is modified (phosphoserine; by MAPKAPK5). Ala-150 serves as a coordination point for GDP. Ala-150 contacts GTP. Position 181 is a cysteine methyl ester (Cys-181). Cys-181 is lipidated: S-farnesyl cysteine. Residues 182-184 (SVM) constitute a propeptide, removed in mature form.

This sequence belongs to the small GTPase superfamily. Rheb family. In terms of assembly, associates with the mTORC1 complex (MTOR, MLST8 and RPTOR) in a guanyl nucleotide-independent manner. Interacts with TSC2. Interacts with MCRS1; the interaction maintains RHEB at the lysosome in its active GTP-bound form and prevents its interaction with the mTORC1 complex inhibitor TSC2, ensuring activation of the mTORC1 complex by RHEB. Interacts (when prenylated) with PDE6D; this promotes release from membranes. Farnesylation is important for efficiently activating mTORC1-mediated signaling. In terms of processing, polyubiquitinated in response to amino acid, promoting its interaction with MTOR and mTORC1 activation. Deubiquitination by ATXN3 promotes recruitment of the TSC-TBC complex and RHEB inactivation by TSC2. Monoubiquitinated at Lys-8 by RNF152, promoting its association with the TSC-TBC complex. Deubiquitinated at Lys-8 by USP4, promoting mTORC1 activation. Post-translationally, phosphorylation by MAPKAPK5 impairs GTP-binding and inactivation. Expressed at high levels in normal adult cortex as well as a number of peripheral tissues, including lung and intestine.

Its subcellular location is the endomembrane system. It localises to the lysosome membrane. The protein resides in the golgi apparatus membrane. The protein localises to the endoplasmic reticulum membrane. It is found in the cytoplasm. Its subcellular location is the cytosol. It catalyses the reaction GTP + H2O = GDP + phosphate + H(+). With respect to regulation, alternates between an inactive form bound to GDP and an active form bound to GTP. Inactivated by the TSC-TBC complex via the GTPase activating protein (GAP) domain of TSC2. Autoinhibited by Tyr-35, which constrains the active site conformation, restricting the access of the catalytic Asp-65 to the nucleotide-binding pocket. Its function is as follows. Small GTPase that acts as an allosteric activator of the canonical mTORC1 complex, an evolutionarily conserved central nutrient sensor that stimulates anabolic reactions and macromolecule biosynthesis to promote cellular biomass generation and growth. In response to nutrients, growth factors or amino acids, specifically activates the protein kinase activity of MTOR, the catalytic component of the mTORC1 complex: acts by causing a conformational change that allows the alignment of residues in the active site of MTOR, thereby enhancing the phosphorylation of ribosomal protein S6 kinase (RPS6KB1 and RPS6KB2) and EIF4EBP1 (4E-BP1). RHEB is also required for localization of the TSC-TBC complex to lysosomal membranes. In response to starvation, RHEB is inactivated by the TSC-TBC complex, preventing activation of mTORC1. Has low intrinsic GTPase activity. The protein is GTP-binding protein Rheb of Rattus norvegicus (Rat).